A 510-amino-acid polypeptide reads, in one-letter code: NAD(P)H-quinone oxidoreductase subunit 2 A, chloroplastic (510 aa).

The next 13 membrane-spanning stretches (helical) occupy residues 24–44 (LLLF…GLIL), 57–77 (IPWL…ALLF), 99–119 (IFQF…VEYI), 124–144 (MALT…MFLC), 149–169 (LITI…LSGY), 183–203 (YLLM…WLYG), 227–247 (PGIS…LSPA), 295–315 (WHLL…LIAI), 323–343 (MLAY…IVGD), 354–374 (YMLF…LFGL), 395–415 (ALSL…AGFF), 418–438 (IYLF…IGLL), and 484–504 (MIVC…IITI).

This sequence belongs to the complex I subunit 2 family. NDH is composed of at least 16 different subunits, 5 of which are encoded in the nucleus.

It is found in the plastid. The protein localises to the chloroplast thylakoid membrane. It catalyses the reaction a plastoquinone + NADH + (n+1) H(+)(in) = a plastoquinol + NAD(+) + n H(+)(out). The enzyme catalyses a plastoquinone + NADPH + (n+1) H(+)(in) = a plastoquinol + NADP(+) + n H(+)(out). Its function is as follows. NDH shuttles electrons from NAD(P)H:plastoquinone, via FMN and iron-sulfur (Fe-S) centers, to quinones in the photosynthetic chain and possibly in a chloroplast respiratory chain. The immediate electron acceptor for the enzyme in this species is believed to be plastoquinone. Couples the redox reaction to proton translocation, and thus conserves the redox energy in a proton gradient. The polypeptide is NAD(P)H-quinone oxidoreductase subunit 2 A, chloroplastic (Spinacia oleracea (Spinach)).